We begin with the raw amino-acid sequence, 138 residues long: Basic phospholipase A2 beta-bungarotoxin A-AL3 chain (138 aa).

The first 10 residues, 1–10, serve as a signal peptide directing secretion; the sequence is LAVCVSLIGA. Residues 11-18 constitute a propeptide that is removed on maturation; that stretch reads ANIPPQHL. 6 disulfides stabilise this stretch: C45/C137, C47/C63, C62/C118, C69/C111, C79/C104, and C97/C109. Ca(2+)-binding residues include Y46, G48, and G50. The active site involves H66. Residue D67 coordinates Ca(2+). D112 is a catalytic residue.

It belongs to the phospholipase A2 family. Group I subfamily. D49 sub-subfamily. In terms of assembly, heterodimer; disulfide-linked. The A chains have phospholipase A2 activity and the B chains show homology with the basic protease inhibitors. Ca(2+) is required as a cofactor. In terms of tissue distribution, expressed by the venom gland.

It localises to the secreted. The catalysed reaction is a 1,2-diacyl-sn-glycero-3-phosphocholine + H2O = a 1-acyl-sn-glycero-3-phosphocholine + a fatty acid + H(+). Snake venom phospholipase A2 (PLA2) that inhibits neuromuscular transmission by blocking acetylcholine release from the nerve termini. PLA2 catalyzes the calcium-dependent hydrolysis of the 2-acyl groups in 3-sn-phosphoglycerides. This is Basic phospholipase A2 beta-bungarotoxin A-AL3 chain from Bungarus multicinctus (Many-banded krait).